Reading from the N-terminus, the 265-residue chain is Homeobox protein engrailed-2-A (265 aa).

2 stretches are compositionally biased toward basic and acidic residues: residues 1-12 (MEENEQNNREVE) and 102-115 (GEKK…ETLK). Disordered stretches follow at residues 1 to 38 (MEEN…QPHH), 75 to 140 (LSGA…KATQ), and 156 to 181 (DRPS…RPRT). The span at 122–136 (DHSLSSDSDSSQTSS) shows a compositional bias: low complexity. The segment at residues 176 to 235 (DKRPRTAFTADQLQRLKAEFQTNRYLTEQRRQSLAQELSLNESQIKIWFQNKRAKIKKAT) is a DNA-binding region (homeobox).

The protein belongs to the engrailed homeobox family.

It is found in the nucleus. This is Homeobox protein engrailed-2-A (en2-a) from Xenopus laevis (African clawed frog).